Reading from the N-terminus, the 481-residue chain is GDP-fucose protein O-fucosyltransferase 3 (481 aa).

At 1-8 (MVRFQRRK) the chain is on the cytoplasmic side. Residues 9–31 (LLASCLCVTATVFLMVTLQVVVE) traverse the membrane as a helical; Signal-anchor for type II membrane protein segment. Residues 32–481 (LGKFERKKLK…EEFWALVFKD (450 aa)) are Lumenal-facing. N-linked (GlcNAc...) asparagine glycans are attached at residues asparagine 110, asparagine 168, and asparagine 318. A disulfide bridge connects residues cysteine 389 and cysteine 392. An N-linked (GlcNAc...) asparagine glycan is attached at asparagine 468.

It belongs to the glycosyltransferase 10 family. Widely expressed, with a higher expression in liver and thymus.

It localises to the endoplasmic reticulum membrane. The enzyme catalyses L-threonyl-[protein] + GDP-beta-L-fucose = 3-O-(alpha-L-fucosyl)-L-threonyl-[protein] + GDP + H(+). The catalysed reaction is L-seryl-[protein] + GDP-beta-L-fucose = 3-O-(alpha-L-fucosyl)-L-seryl-[protein] + GDP + H(+). It participates in protein modification; protein glycosylation. In terms of biological role, protein O-fucosyltransferase that specifically catalyzes O-fucosylation of serine or threonine residues in EMI domains of target proteins, such as MMRN1, MMRN2 and EMID1. Attaches fucose through an O-glycosidic linkage. O-fucosylation of EMI domain-containing proteins may be required for facilitating protein folding and secretion. May also show alpha-(1,3)-fucosyltransferase activity toward the innermost N-acetyl glucosamine (GlcNAc) residue in biantennary N-glycan acceptors. However, this was tested with a library of synthetic substrates and this activity is unsure in vivo. May be involved in biosynthesis of Lewis X-carrying biantennary N-glycans that regulate neuron stem cell self-renewal during brain development. In Mus musculus (Mouse), this protein is GDP-fucose protein O-fucosyltransferase 3.